The following is a 78-amino-acid chain: UPF0235 protein AF_2072 (78 aa).

This sequence belongs to the UPF0235 family.

The chain is UPF0235 protein AF_2072 from Archaeoglobus fulgidus (strain ATCC 49558 / DSM 4304 / JCM 9628 / NBRC 100126 / VC-16).